Consider the following 501-residue polypeptide: Glutamate--tRNA ligase (501 aa).

The short motif at 11–21 (PSPTGFLHIGN) is the 'HIGH' region element. The short motif at 257 to 261 (KLSKR) is the 'KMSKS' region element. Residue lysine 260 participates in ATP binding.

The protein belongs to the class-I aminoacyl-tRNA synthetase family. Glutamate--tRNA ligase type 1 subfamily. As to quaternary structure, monomer.

The protein localises to the cytoplasm. The enzyme catalyses tRNA(Glu) + L-glutamate + ATP = L-glutamyl-tRNA(Glu) + AMP + diphosphate. Its function is as follows. Catalyzes the attachment of glutamate to tRNA(Glu) in a two-step reaction: glutamate is first activated by ATP to form Glu-AMP and then transferred to the acceptor end of tRNA(Glu). The sequence is that of Glutamate--tRNA ligase from Limosilactobacillus reuteri subsp. reuteri (strain JCM 1112) (Lactobacillus reuteri).